A 194-amino-acid polypeptide reads, in one-letter code: Gonadal protein gdl (194 aa).

It belongs to the gonadal family. As to expression, in stage 6-14 egg chamber nurse cells and oocytes of adult females and spermatocyte cysts and bundles of maturing sperm of larval, pupal and adult males.

This is Gonadal protein gdl (gdl) from Drosophila melanogaster (Fruit fly).